The primary structure comprises 379 residues: Heme A synthase (379 aa).

A disordered region spans residues 1–28; it reads MAGSRSIFEEVQDSQKPAAMPGGVSRDR. 8 helical membrane passes run 35-55, 124-144, 150-170, 183-203, 227-247, 287-307, 318-338, and 341-361; these read VRVF…IGGL, FLGV…SVPV, LLLL…MVHS, RLAV…WYIL, ATGL…VAGI, FFHR…WIMA, AFDW…MTVM, and SPWY…TLIL. His-289 contributes to the heme binding site. Heme is bound at residue His-349.

It belongs to the COX15/CtaA family. Type 2 subfamily. Interacts with CtaB. Heme b is required as a cofactor.

It is found in the cell membrane. The enzyme catalyses Fe(II)-heme o + 2 A + H2O = Fe(II)-heme a + 2 AH2. It participates in porphyrin-containing compound metabolism; heme A biosynthesis; heme A from heme O: step 1/1. Its function is as follows. Catalyzes the conversion of heme O to heme A by two successive hydroxylations of the methyl group at C8. The first hydroxylation forms heme I, the second hydroxylation results in an unstable dihydroxymethyl group, which spontaneously dehydrates, resulting in the formyl group of heme A. The protein is Heme A synthase of Jannaschia sp. (strain CCS1).